Reading from the N-terminus, the 214-residue chain is DELTA-actitoxin-Aeq1a (214 aa).

Positions 1 to 19 are cleaved as a signal peptide; it reads MSRLIIVFIVVTMICSATA. Positions 20–35 are excised as a propeptide; sequence LPSKKIIDEDEEDEKR. Positions 38–47 are plays an important role in the hemolytic activity; that stretch reads DVAGAVIDGA. The tract at residues 46–65 is N-terminal region; the sequence is GASLSFDILKTVLEALGNVK. Positions 89, 122, 140, 142, 168, 172, and 173 each coordinate phosphocholine. The segment at 140 to 155 is trp-rich region, which is important for the binding to lipid membrane; sequence SVPYDYNWYSNWWNVR. The Cell attachment site, crucial for protein stability motif lies at 179–181; the sequence is RGD.

Belongs to the actinoporin family. Sea anemone subfamily. In terms of assembly, octamer or nonamer in membranes. Monomer in the soluble state.

It localises to the secreted. The protein localises to the nematocyst. Its subcellular location is the target cell membrane. Functionally, pore-forming protein that forms cations-selective hydrophilic pores of around 1 nm and causes cardiac stimulation and cytolysis. Pore formation is a multi-step process that involves specific recognition of membrane sphingomyelin (but neither cholesterol nor phosphatidylcholine) using aromatic rich region and adjacent phosphocholine (POC) binding site, firm binding to the membrane (mainly driven by hydrophobic interactions) accompanied by the transfer of the N-terminal region to the lipid-water interface and finally pore formation after oligomerization of monomers. Cytolytic effects include red blood cells hemolysis, platelet aggregation and lysis, cytotoxic and cytostatic effects on fibroblasts. Lethality in mammals has been ascribed to severe vasospasm of coronary vessels, cardiac arrhythmia, and inotropic effects. This chain is DELTA-actitoxin-Aeq1a, found in Actinia equina (Beadlet anemone).